A 203-amino-acid chain; its full sequence is A-type ATP synthase subunit E (203 aa).

It belongs to the V-ATPase E subunit family. In terms of assembly, has multiple subunits with at least A(3), B(3), C, D, E, F, H, I and proteolipid K(x).

The protein localises to the cell membrane. Functionally, component of the A-type ATP synthase that produces ATP from ADP in the presence of a proton gradient across the membrane. The protein is A-type ATP synthase subunit E of Desulfurococcus sp. (strain SY).